A 178-amino-acid chain; its full sequence is uncharacterized protein (178 aa).

The interval 64–103 is disordered; the sequence is GVSDNTNKTTAKDNVSDKSSENEVAQPKQVTPPVDATGNT. Residues 73–84 show a composition bias toward basic and acidic residues; it reads TAKDNVSDKSSE.

This is an uncharacterized protein from Acidianus sp. F28 (AFV-2).